The chain runs to 379 residues: Homoserine O-succinyltransferase (379 aa).

In terms of domain architecture, AB hydrolase-1 spans 48 to 357 (NAVLICHALS…SAHGHDAFLM (310 aa)). Ser-154 (nucleophile) is an active-site residue. Arg-224 provides a ligand contact to substrate. Catalysis depends on residues Asp-319 and His-352. Asp-353 provides a ligand contact to substrate.

The protein belongs to the AB hydrolase superfamily. MetX family. In terms of assembly, homodimer.

The protein localises to the cytoplasm. It carries out the reaction L-homoserine + succinyl-CoA = O-succinyl-L-homoserine + CoA. It functions in the pathway amino-acid biosynthesis; L-methionine biosynthesis via de novo pathway; O-succinyl-L-homoserine from L-homoserine: step 1/1. In terms of biological role, transfers a succinyl group from succinyl-CoA to L-homoserine, forming succinyl-L-homoserine. In Neisseria gonorrhoeae (strain ATCC 700825 / FA 1090), this protein is Homoserine O-succinyltransferase.